Consider the following 137-residue polypeptide: Golgin subfamily A member 7 (137 aa).

S-palmitoyl cysteine attachment occurs at residues Cys-69 and Cys-72.

The protein belongs to the ERF4 family. In terms of assembly, interacts with GOLGA3. Interacts with ZDHHC9. Post-translationally, palmitoylated on Cys-69 and Cys-72; which is required for Golgi localization and interaction with GOLGA3.

The protein resides in the golgi apparatus membrane. Functionally, may be involved in protein transport from Golgi to cell surface. The ZDHHC9-GOLGA7 complex is a palmitoyltransferase specific for HRAS and NRAS. The polypeptide is Golgin subfamily A member 7 (GOLGA7) (Bos taurus (Bovine)).